We begin with the raw amino-acid sequence, 253 residues long: Precorrin-4 C(11)-methyltransferase (253 aa).

Belongs to the precorrin methyltransferase family.

The catalysed reaction is precorrin-4 + S-adenosyl-L-methionine = precorrin-5 + S-adenosyl-L-homocysteine. It participates in cofactor biosynthesis; adenosylcobalamin biosynthesis; cob(II)yrinate a,c-diamide from precorrin-2 (aerobic route): step 4/10. In terms of biological role, catalyzes the methylation of C-11 in precorrin-4 to form precorrin-5. This chain is Precorrin-4 C(11)-methyltransferase (cobM), found in Sinorhizobium sp.